We begin with the raw amino-acid sequence, 773 residues long: ATP-dependent zinc metalloprotease YME1L1 (773 aa).

Topologically, residues Met1–Leu295 are mitochondrial matrix. A helical transmembrane segment spans residues Ile296–Val316. Topologically, residues Arg317–Arg773 are mitochondrial intermembrane. ATP is bound by residues Val341, Thr383, Gly384, Lys385, Thr386, and Leu387. His599 contributes to the Zn(2+) binding site. The active site involves Glu600. Positions 603 and 677 each coordinate Zn(2+).

In the N-terminal section; belongs to the AAA ATPase family. The protein in the C-terminal section; belongs to the peptidase M41 family. Homohexamer; may also form heterohexamers. Exists in several complexes of 600-1100 kDa. Interacts with AFG1L. Zn(2+) is required as a cofactor. Proteolytically processed by mitochondrial processing peptidase (MPP) to generate the mature form. Degraded in an OMA1-dependent manner in response to oxidative stress. As to expression, high expression in cardiac and skeletal muscle mitochondria.

Its subcellular location is the mitochondrion inner membrane. The protein resides in the mitochondrion. It catalyses the reaction ATP + H2O = ADP + phosphate + H(+). Its function is as follows. ATP-dependent metalloprotease that catalyzes the degradation of folded and unfolded proteins with a suitable degron sequence in the mitochondrial intermembrane region. Plays an important role in regulating mitochondrial morphology and function by cleaving OPA1 at position S2, giving rise to a form of OPA1 that promotes maintenance of normal mitochondrial structure and mitochondrial protein metabolism. Ensures cell proliferation, maintains normal cristae morphology and complex I respiration activity, promotes antiapoptotic activity and protects mitochondria from the accumulation of oxidatively damaged membrane proteins. Required to control the accumulation of nonassembled respiratory chain subunits (NDUFB6, OX4 and ND1). Involved in the mitochondrial adaptation in response to various signals, such as stress or developmental cues, by mediating degradation of mitochondrial proteins to rewire the mitochondrial proteome. Catalyzes degradation of mitochondrial proteins, such as translocases, lipid transfer proteins and metabolic enzymes in response to nutrient starvation in order to limit mitochondrial biogenesis: mechanistically, YME1L is activated by decreased phosphatidylethanolamine levels caused by LPIN1 activity in response to mTORC1 inhibition. Acts as a regulator of adult neural stem cell self-renewal by promoting mitochondrial proteome rewiring, preserving neural stem and progenitor cells self-renewal. Required for normal, constitutive degradation of PRELID1. Catalyzes the degradation of OMA1 in response to membrane depolarization. Mediates degradation of TIMM17A downstream of the integrated stress response (ISR). Catalyzes degradation of MICU1 when MICU1 is not assembled via an interchain disulfide. The sequence is that of ATP-dependent zinc metalloprotease YME1L1 (YME1L1) from Homo sapiens (Human).